Reading from the N-terminus, the 121-residue chain is Spermidine export protein MdtJ (121 aa).

4 helical membrane-spanning segments follow: residues 1–21 (MYIYWILLGLAIATEITGTLS), 32–52 (GGFILMLVMISLSYIFLSFAV), 55–75 (IALGVAYALWEGIGILFITLF), and 82–102 (ESLSLMKIAGLTTLVAGIVLI).

It belongs to the drug/metabolite transporter (DMT) superfamily. Small multidrug resistance (SMR) (TC 2.A.7.1) family. MdtJ subfamily. In terms of assembly, forms a complex with MdtI.

It localises to the cell inner membrane. Catalyzes the excretion of spermidine. The polypeptide is Spermidine export protein MdtJ (Escherichia coli O139:H28 (strain E24377A / ETEC)).